The sequence spans 500 residues: Dipeptide and tripeptide permease A (500 aa).

The Cytoplasmic portion of the chain corresponds to 1–21; the sequence is MSTANQKPTESVSLNAFKQPK. Residues 22 to 44 form a helical membrane-spanning segment; that stretch reads AFYLIFSIELWERFGYYGLQGIM. Residues 45-59 lie on the Periplasmic side of the membrane; it reads AVYLVKQLGMSEADS. The helical transmembrane segment at 60 to 80 threads the bilayer; the sequence is ITLFSSFSALVYGLVAIGGWL. The Cytoplasmic segment spans residues 81 to 89; sequence GDKVLGTKR. A helical transmembrane segment spans residues 90 to 110; the sequence is VIMLGAIVLAIGYALVAWSGH. Residue D111 is a topological domain, periplasmic. A helical membrane pass occupies residues 112–132; sequence AGIVYMGMAAIAVGNGLFKAN. Topologically, residues 133-153 are cytoplasmic; that stretch reads PSSLLSTCYEKNDPRLDGAFT. Residues 154–174 traverse the membrane as a helical segment; that stretch reads MYYMSVNIGSFFSMIATPWLA. Residues 175–178 are Periplasmic-facing; it reads AKYG. A helical membrane pass occupies residues 179 to 199; sequence WSVAFALSVVGLLITIVNFAF. Topologically, residues 200 to 219 are cytoplasmic; sequence CQRWVKQYGSKPDFEPINYR. The chain crosses the membrane as a helical span at residues 220 to 240; that stretch reads NLLLTIIGVVALIAIATWLLH. Topologically, residues 241–246 are periplasmic; the sequence is NQEVAR. The chain crosses the membrane as a helical span at residues 247 to 267; the sequence is MALGVVAFGIVVIFGKEAFAM. The Cytoplasmic segment spans residues 268–274; that stretch reads KGAARRK. A helical membrane pass occupies residues 275–295; that stretch reads MIVAFILMLEAIIFFVLYSQM. Topologically, residues 296 to 320 are periplasmic; it reads PTSLNFFAIRNVEHSILGLAVEPEQ. A helical membrane pass occupies residues 321–341; the sequence is YQALNPFWIIIGSPILAAIYN. The Cytoplasmic segment spans residues 342–352; it reads KMGDTLPMPTK. The chain crosses the membrane as a helical span at residues 353 to 373; it reads FAIGMVMCSGAFLILPLGAKF. Residues 374 to 378 are Periplasmic-facing; it reads ASDAG. A helical transmembrane segment spans residues 379–399; that stretch reads IVSVSWLVASYGLQSIGELMI. Residues 400–414 lie on the Cytoplasmic side of the membrane; it reads SGLGLAMVAQLVPQR. The helical transmembrane segment at 415–435 threads the bilayer; that stretch reads LMGFIMGSWFLTTAGANLIGG. The Periplasmic portion of the chain corresponds to 436–459; the sequence is YVAGMMAVPDNVTDPLMSLEVYGR. Residues 460 to 480 traverse the membrane as a helical segment; it reads VFLQIGVATAVIAVLMLLTAP. At 481-500 the chain is on the cytoplasmic side; that stretch reads KLHRMTQDDAADKAAKAAVA.

This sequence belongs to the major facilitator superfamily. Proton-dependent oligopeptide transporter (POT/PTR) (TC 2.A.17) family. DtpA subfamily. As to quaternary structure, monomer. Has a crown-like structure with a diameter of 8 nm and a central density.

It is found in the cell inner membrane. Its function is as follows. Proton-dependent permease that transports di- and tripeptides as well as structurally related peptidomimetics such as aminocephalosporins into the cell. Has a clear preference for dipeptides and tripeptides composed of L-amino acids, and discriminates dipeptides on the basis of the position of charges within the substrate. The chain is Dipeptide and tripeptide permease A (dtpA) from Escherichia coli (strain K12).